Reading from the N-terminus, the 558-residue chain is Rhamnogalacturonase B (558 aa).

Positions 1–21 (MLLDKLSVLSFLGLAPIFAAA) are cleaved as a signal peptide. Cys-42 and Cys-68 are disulfide-bonded. A glycan (N-linked (GlcNAc...) asparagine) is linked at Asn-145. The active-site Proton donor is the Asp-219. Residues Cys-221 and Cys-238 are joined by a disulfide bond. Residues Asn-239 and Asn-254 are each glycosylated (N-linked (GlcNAc...) asparagine). Residue His-294 is part of the active site. N-linked (GlcNAc...) asparagine glycosylation occurs at Asn-321. Cystine bridges form between Cys-344–Cys-350 and Cys-372–Cys-381. A compositionally biased stretch (low complexity) spans 503 to 526 (VGAQEGSTTSAPSFAAPSGAGNSP). The interval 503–558 (VGAQEGSTTSAPSFAAPSGAGNSPQGPTGASGFGEKGQQGEQGEQGEQGEQGVCYV) is disordered.

It belongs to the glycosyl hydrolase 28 family.

The protein localises to the secreted. It carries out the reaction Endohydrolysis of alpha-D-GalA-(1-&gt;2)-alpha-L-Rha glycosidic bond in the rhamnogalacturonan I backbone with initial inversion of anomeric configuration releasing oligosaccharides with beta-D-GalA at the reducing end.. Functionally, pectinolytic enzymes consist of four classes of enzymes: pectine lyase, polygalacturonase, pectin methylesterase and rhamnogalacturonase. Hydrolyzes alpha-D-galacturonopyranosyl-(1,2)-alpha-L-rhamnopyranosyl linkages in the backbone of the hairy regions of pectins. The chain is Rhamnogalacturonase B (rhgB) from Aspergillus niger.